Here is a 1323-residue protein sequence, read N- to C-terminus: Sister chromatid cohesion protein PDS5 homolog A-B (1323 aa).

The stretch at 385 to 421 (FLVNDQLLGFVRERTLDKRWRVRKEAMMGLAQLYKKY) is one HEAT repeat. A disordered region spans residues 1138-1323 (PLNATGRRPY…TAQRQIDLHR (186 aa)). Residues 1153–1165 (SEISNNVSINSES) are compositionally biased toward low complexity. 2 stretches are compositionally biased toward polar residues: residues 1166 to 1176 (DASVANRQSSE) and 1210 to 1220 (LDQTAPSNTGT). The segment covering 1235–1246 (NIRKESEEKKVD) has biased composition (basic and acidic residues).

In terms of assembly, interacts with the cohesin complex. Binds chromatin in a cohesin-dependent manner.

It is found in the nucleus. In terms of biological role, may regulate sister chromatid cohesion during mitosis and couple it to DNA replication. This is Sister chromatid cohesion protein PDS5 homolog A-B (pds5a-b) from Xenopus laevis (African clawed frog).